A 405-amino-acid polypeptide reads, in one-letter code: Bone morphogenetic protein 4 (405 aa).

The first 19 residues, 1–19 (MIPGNRMLMVILLCQVLLG), serve as a signal peptide directing secretion. Positions 20-291 (GTNHASLIPE…GHALTRRARR (272 aa)) are excised as a propeptide. N-linked (GlcNAc...) asparagine glycosylation is found at N144, N208, N347, and N362. Cystine bridges form between C305–C370, C334–C402, and C338–C404.

This sequence belongs to the TGF-beta family. In terms of assembly, homodimer; disulfide-linked. Part of a complex consisting of TWSG1 and CHRD. Forms a ternary complex with chordin/CHRD and TSKU.

The protein localises to the secreted. Negatively regulates the structure and function of the limb apical ectodermal ridge. In Gallus gallus (Chicken), this protein is Bone morphogenetic protein 4 (BMP4).